The following is a 1332-amino-acid chain: Sister chromatid cohesion protein PDS5 homolog A (1332 aa).

Methionine 1 is modified (N-acetylmethionine). Residues 392-428 (ALVNDQLLGFVRERTLDKRWRVRKEAMMGLAQLYKKY) form an HEAT repeat. Serine 1096 is subject to Phosphoserine. Residues 1138 to 1332 (GVLGTVNKPL…PAERQIDLQR (195 aa)) are disordered. Lysine 1145 is subject to N6-acetyllysine. Residues 1160 to 1173 (GTETGSNINANSEL) are compositionally biased toward polar residues. A phosphoserine mark is found at serine 1174 and serine 1194. At threonine 1207 the chain carries Phosphothreonine. N6-acetyllysine is present on lysine 1210. Over residues 1222-1232 (SDQSTQGNISS) the composition is skewed to polar residues. Position 1288 is an N6-acetyllysine (lysine 1288). Serine 1303 is modified (phosphoserine). Residues 1316–1332 (DGAKKAVPAERQIDLQR) are compositionally biased toward basic and acidic residues.

This sequence belongs to the PDS5 family. Interacts with the cohesin complex. Interacts with WAPL (via FGF motifs) or CDCA5 (via the FGF motif); the interaction is direct, cohesin-dependent and competitive. Interacts with SMC3. Interacts with TP63.

The protein resides in the nucleus. Its function is as follows. Probable regulator of sister chromatid cohesion in mitosis which may stabilize cohesin complex association with chromatin. May couple sister chromatid cohesion during mitosis to DNA replication. Cohesion ensures that chromosome partitioning is accurate in both meiotic and mitotic cells and plays an important role in DNA repair. This is Sister chromatid cohesion protein PDS5 homolog A (Pds5a) from Mus musculus (Mouse).